Consider the following 204-residue polypeptide: Cytochrome c biogenesis ATP-binding export protein CcmA (204 aa).

In terms of domain architecture, ABC transporter spans L3 to L204. Position 35–42 (G35–T42) interacts with ATP.

This sequence belongs to the ABC transporter superfamily. CcmA exporter (TC 3.A.1.107) family. The complex is composed of two ATP-binding proteins (CcmA) and two transmembrane proteins (CcmB).

The protein localises to the cell membrane. The catalysed reaction is heme b(in) + ATP + H2O = heme b(out) + ADP + phosphate + H(+). Its function is as follows. Part of the ABC transporter complex CcmAB involved in the biogenesis of c-type cytochromes; once thought to export heme, this seems not to be the case, but its exact role is uncertain. Responsible for energy coupling to the transport system. In Ruegeria pomeroyi (strain ATCC 700808 / DSM 15171 / DSS-3) (Silicibacter pomeroyi), this protein is Cytochrome c biogenesis ATP-binding export protein CcmA.